A 256-amino-acid chain; its full sequence is Geranylgeranylglyceryl phosphate synthase (256 aa).

2 residues coordinate Mg(2+): aspartate 28 and serine 53. Residues 172–178 (YLEAGSG), 203–204 (GG), and 225–226 (GT) each bind sn-glycerol 1-phosphate.

Belongs to the GGGP/HepGP synthase family. Group II subfamily. Mg(2+) serves as cofactor.

It is found in the cytoplasm. The catalysed reaction is sn-glycerol 1-phosphate + (2E,6E,10E)-geranylgeranyl diphosphate = sn-3-O-(geranylgeranyl)glycerol 1-phosphate + diphosphate. It functions in the pathway membrane lipid metabolism; glycerophospholipid metabolism. Prenyltransferase that catalyzes the transfer of the geranylgeranyl moiety of geranylgeranyl diphosphate (GGPP) to the C3 hydroxyl of sn-glycerol-1-phosphate (G1P). This reaction is the first ether-bond-formation step in the biosynthesis of archaeal membrane lipids. This is Geranylgeranylglyceryl phosphate synthase from Methanococcus maripaludis (strain DSM 14266 / JCM 13030 / NBRC 101832 / S2 / LL).